We begin with the raw amino-acid sequence, 274 residues long: Hydroxyethylthiazole kinase (274 aa).

M54 provides a ligand contact to substrate. The ATP site is built by R129 and T175. Substrate is bound at residue G202.

It belongs to the Thz kinase family. It depends on Mg(2+) as a cofactor.

The catalysed reaction is 5-(2-hydroxyethyl)-4-methylthiazole + ATP = 4-methyl-5-(2-phosphooxyethyl)-thiazole + ADP + H(+). The protein operates within cofactor biosynthesis; thiamine diphosphate biosynthesis; 4-methyl-5-(2-phosphoethyl)-thiazole from 5-(2-hydroxyethyl)-4-methylthiazole: step 1/1. Its function is as follows. Catalyzes the phosphorylation of the hydroxyl group of 4-methyl-5-beta-hydroxyethylthiazole (THZ). The chain is Hydroxyethylthiazole kinase from Granulibacter bethesdensis (strain ATCC BAA-1260 / CGDNIH1).